The following is a 259-amino-acid chain: Putative protein-disulfide oxidoreductase RBE_1288 (259 aa).

Positions 1-20 (MRNSFITLIFLLLLSGCSEE) are cleaved as a signal peptide. The disordered stretch occupies residues 25-54 (VEQESSESITPAQASTSDENNNQTTETTTP). A compositionally biased stretch (polar residues) spans 33–42 (ITPAQASTSD). Residues 43–54 (ENNNQTTETTTP) are compositionally biased toward low complexity. The Thioredoxin domain maps to 47–251 (QTTETTTPAV…ISAAIDKAIE (205 aa)). An intrachain disulfide couples C104 to C107.

The protein belongs to the thioredoxin family. DsbA subfamily.

It is found in the periplasm. May be required for disulfide bond formation in some proteins. This Rickettsia bellii (strain RML369-C) protein is Putative protein-disulfide oxidoreductase RBE_1288.